Here is a 164-residue protein sequence, read N- to C-terminus: Transcription elongation factor GreA (164 aa).

A coiled-coil region spans residues 50 to 76 (YHAAREEQGQQEARIRQLQDLLSNAKV).

This sequence belongs to the GreA/GreB family.

Its function is as follows. Necessary for efficient RNA polymerase transcription elongation past template-encoded arresting sites. The arresting sites in DNA have the property of trapping a certain fraction of elongating RNA polymerases that pass through, resulting in locked ternary complexes. Cleavage of the nascent transcript by cleavage factors such as GreA or GreB allows the resumption of elongation from the new 3'terminus. GreA releases sequences of 2 to 3 nucleotides. The chain is Transcription elongation factor GreA from Mycobacterium bovis (strain ATCC BAA-935 / AF2122/97).